An 862-amino-acid chain; its full sequence is DNA mismatch repair protein MutS (862 aa).

An ATP-binding site is contributed by 621–628; sequence GPNMGGKS.

The protein belongs to the DNA mismatch repair MutS family.

In terms of biological role, this protein is involved in the repair of mismatches in DNA. It is possible that it carries out the mismatch recognition step. This protein has a weak ATPase activity. This Vibrio cholerae serotype O1 (strain ATCC 39541 / Classical Ogawa 395 / O395) protein is DNA mismatch repair protein MutS.